The sequence spans 69 residues: YIELAVVADHGMFTKYNSNIDTIRVHEMVNTVDGFFRSMNVDASIANIEVWSKTITSFGEWRERDIIPR.

The Peptidase M12B domain occupies 1–69 (YIELAVVADH…EWRERDIIPR (69 aa)). E3 is a Ca(2+) binding site.

This sequence belongs to the venom metalloproteinase (M12B) family. P-I subfamily. As to quaternary structure, monomer. Requires Zn(2+) as cofactor. In terms of tissue distribution, expressed by the venom gland.

Its subcellular location is the secreted. With respect to regulation, inhibited by EDTA. Functionally, this protein is a zinc protease from snake venom that is devoid of significant myotoxic and hemorrhagic activities. It hydrolyzes the Aalpha-chain and more slowly the Bbeta-chain of fibrin and fibrinogen, without affecting the gamma-chains. It induces cell detachment and a apoptosis (anoikis) in endothelial cells. The chain is Snake venom metalloproteinase BnP2 from Bothrops pauloensis (Neuwied's lancehead).